The sequence spans 453 residues: Folate transporter 1 (453 aa).

N-linked (GlcNAc...) asparagine glycosylation occurs at Asn36. 5 helical membrane passes run 48–68 (PYWTYSYMLALIPMFILTDIL), 73–93 (IVMIEAIGLVATWALLVFGKG), 102–122 (VSFGVASAAEIAYYSYIYSIV), 136–156 (AAALMGKLVAFGLGQTLISTH), and 161–181 (LVLNQISLGAVCLVTIIAIFL). A glycan (N-linked (GlcNAc...) asparagine) is linked at Asn260. The next 5 helical transmembrane spans lie at 276–296 (VANGVVEFVNTALGAFLSLFI), 306–326 (HGQMILFITSAIVAVLLYLCS), 331–351 (VLVAYSSYVVITSIYHMLITA), 368–388 (IFGCNTFVAVCLQSLLTLVVV), and 401–421 (FVIYSGYFALVASIFAFFFMI).

This sequence belongs to the reduced folate carrier (RFC) transporter (TC 2.A.48) family. In terms of tissue distribution, highly expressed in pharynx and posterior part of the intestine. Expressed at lower levels in the body wall muscles, head muscles, and vulva muscles. Highly expressed in the intestine of the early larva, levels decrease in the later stages of development.

The protein resides in the membrane. Folate transporter. The chain is Folate transporter 1 (folt-1) from Caenorhabditis elegans.